We begin with the raw amino-acid sequence, 257 residues long: MPLAKRIIPCLDVDKGRVVKGVQFVDIRDAGDPVEVAKKYNEQGADEITFLDITASVEGRETTVQTVEKIAAEVFIPLTVGGGIRTLEDIRTMLNAGADKVSINSAAVKDPEFVKAAAEGFGSQCIVVAIDAKKVSAEGEPPRWEIFTHGGRKPTGIDAIEWAIRMTDYGAGEILLTSMDKDGTKDGFDLAVTRAIADAVPVPVIASGGVGNLQHLVDGVIEGGADAVLAASIFHFGEYTVPQAKEYMQERGVEVRL.

Residues Asp12 and Asp131 contribute to the active site.

This sequence belongs to the HisA/HisF family. As to quaternary structure, heterodimer of HisH and HisF.

The protein localises to the cytoplasm. The enzyme catalyses 5-[(5-phospho-1-deoxy-D-ribulos-1-ylimino)methylamino]-1-(5-phospho-beta-D-ribosyl)imidazole-4-carboxamide + L-glutamine = D-erythro-1-(imidazol-4-yl)glycerol 3-phosphate + 5-amino-1-(5-phospho-beta-D-ribosyl)imidazole-4-carboxamide + L-glutamate + H(+). The protein operates within amino-acid biosynthesis; L-histidine biosynthesis; L-histidine from 5-phospho-alpha-D-ribose 1-diphosphate: step 5/9. In terms of biological role, IGPS catalyzes the conversion of PRFAR and glutamine to IGP, AICAR and glutamate. The HisF subunit catalyzes the cyclization activity that produces IGP and AICAR from PRFAR using the ammonia provided by the HisH subunit. The chain is Imidazole glycerol phosphate synthase subunit HisF from Saccharophagus degradans (strain 2-40 / ATCC 43961 / DSM 17024).